The following is a 538-amino-acid chain: Sterol esterase 2 (538 aa).

Topologically, residues 1–11 are cytoplasmic; it reads MVNKVVDEVQR. A helical; Signal-anchor for type II membrane protein membrane pass occupies residues 12–32; that stretch reads LVSAIILTSFMTGLFILSLWK. Topologically, residues 33–538 are lumenal; sequence NYVTVHFQHK…IENLRFPNAR (506 aa). The tract at residues 42 to 87 is disordered; the sequence is KNDPRDTRSSRTKIQPNDKKKKRPARHSRPLSISSTTPLDLQRDQE. A compositionally biased stretch (basic residues) spans 60–70; the sequence is KKKKRPARHSR. A phosphoserine mark is found at Ser-73 and Ser-107. Catalysis depends on Ser-287, which acts as the Nucleophile. Catalysis depends on charge relay system residues Asp-480 and His-511.

It belongs to the AB hydrolase superfamily. In terms of processing, not glycosylated.

It is found in the cell membrane. It catalyses the reaction a sterol ester + H2O = a sterol + a fatty acid + H(+). Mediates the hydrolysis of steryl esters. Required for mobilization of steryl ester, thereby playing a central role in lipid metabolism. The polypeptide is Sterol esterase 2 (YEH2) (Saccharomyces cerevisiae (strain ATCC 204508 / S288c) (Baker's yeast)).